The chain runs to 413 residues: MTVLVEVREYDPSKDLATVEDVERRCEVGPAGKLSLFTDLLGDPICRVRHSPSYLMLVAEIGPKEKKELVGMIRGCIKTVTCGITTKRLDLTHNKSQNDVVITKPLYTKLAYILGLRVSPTHRRQGIGFKLVKAMEDWFSQNGAEYSYFATENDNHASVNLFTGKCGYAEFRTPSILVNPVYAHRVNISRRVTVIKLEPSDAELLYRLRFSTTEFFPRDIDSVLNNKLSLGTFVAVPRGSCYGSGSRSWPGSAKFLEYPPDSWAVLSVWNCKDSFRLEVRGASRLRRVVSKATRMVDKTLPFLKIPSIPAVFRPFGLHFMYGIGGEGPRAEKMVKALCDHAHNLAKEGGCGVVAAEVAGEEPLRRGIPHWKVLSCAEDLWCIKRLGEDYSDGSVGDWTKSPPGDSIFVDPREF.

Residues 5–187 (VEVREYDPSK…VNPVYAHRVN (183 aa)) form the N-acetyltransferase domain.

This sequence belongs to the acetyltransferase family.

The chain is Probable N-acetyltransferase HLS1-like from Arabidopsis thaliana (Mouse-ear cress).